The following is a 359-amino-acid chain: Peptide chain release factor 1 (359 aa).

Glutamine 236 carries the post-translational modification N5-methylglutamine.

Belongs to the prokaryotic/mitochondrial release factor family. In terms of processing, methylated by PrmC. Methylation increases the termination efficiency of RF1.

It is found in the cytoplasm. Functionally, peptide chain release factor 1 directs the termination of translation in response to the peptide chain termination codons UAG and UAA. The sequence is that of Peptide chain release factor 1 from Streptococcus pneumoniae (strain Taiwan19F-14).